The primary structure comprises 465 residues: MEITDLAAEGNALCRIDDMVMFVPFAAPGDRCTVQVVKKKRNFMQGRIVSIESPSPIRKGPFCTHFTVCGGCKWQHIPYEIQLRAKEQQVTDALVRLGKVEVEEMQPILGSEQTEYYRNKLEFTFSNKRWLLPEEVQEVDGDFSPEVRYGLGFHIPGMFDKVLDIRECHLGAKVSDEIRLFIREYCMQDPERYPFFDLRNQEGLMRTLMIRTTSTGELMVVVVFFRDDVAAREALLAAVAERFPQITSLLYVINTKCNDTIGDQEVLLYHGREYIEEEMEGLKFKIGAKSFYQTNSRQAYQLYRIAREFAGLTGDELVYDLYTGTGTIANFVAGQAHRVIGIEYVPEAIEDARTNSLLNGIENTLFYAGDMKDILTNDFIEQHGRPDVVITDPPRAGMHESVIDAILFAAPRRIVYVSCNPATQARDLALLMADGRYRAVKSRPVDMFPHTHHVENVVLLVRNTE.

Residues 1–50 (MEITDLAAEGNALCRIDDMVMFVPFAAPGDRCTVQVVKKKRNFMQGRIVS) form the TRAM domain. Positions 63, 69, 72, and 168 each coordinate [4Fe-4S] cluster. Positions 293, 322, 343, and 392 each coordinate S-adenosyl-L-methionine. Residue Cys-419 is the Nucleophile of the active site.

This sequence belongs to the class I-like SAM-binding methyltransferase superfamily. RNA M5U methyltransferase family.

This is an uncharacterized protein from Porphyromonas gingivalis (strain ATCC BAA-308 / W83).